A 194-amino-acid chain; its full sequence is Small ribosomal subunit protein eS7 (194 aa).

Belongs to the eukaryotic ribosomal protein eS7 family.

In Drosophila melanogaster (Fruit fly), this protein is Small ribosomal subunit protein eS7 (RpS7).